Reading from the N-terminus, the 715-residue chain is Scinderin (715 aa).

The actin-severing stretch occupies residues 1–363 (MAQGLYHEEF…DGFGKVYVTE (363 aa)). A Gelsolin-like 1 repeat occupies 27–77 (LELVPVPESAYGNFYVGDAYLVLHTTQASRGFTYRLHFWLGKECTQDESTA). Position 102 is a phosphotyrosine (Tyr-102). A 1,2-diacyl-sn-glycero-3-phospho-(1D-myo-inositol-4,5-bisphosphate) is bound by residues 112–119 (KGGLKYKA) and 138–146 (RLLHVKGRR). Gelsolin-like repeat units lie at residues 148 to 188 (VRAT…YERL), 265 to 307 (LVAE…QERK), 398 to 451 (VQIW…DELT), and 523 to 564 (TRIM…EEEK). The interval 364 to 715 (KVAHVKQIPF…WFLGWDSSRW (352 aa)) is actin-binding, Ca-sensitive. Residues 364 to 715 (KVAHVKQIPF…WFLGWDSSRW (352 aa)) form a ca(2+)-dependent actin binding region. Ca(2+) is bound by residues Asn-538, Asp-539, and Glu-562. Tyr-599 carries the phosphotyrosine modification. A Gelsolin-like 6 repeat occupies 626–668 (FIIEEVPGEFTQDDLAEDDVMLLDAWEQIFIWIGKDANEVEKS). Residues Asp-643, Asp-644, and Glu-666 each contribute to the Ca(2+) site.

Belongs to the villin/gelsolin family. Post-translationally, the N-terminus is blocked. As to expression, in the adrenal gland, expressed in the medulla but, in the cortex, found only in diffuse parts.

Its subcellular location is the cytoplasm. It localises to the cytoskeleton. It is found in the cell projection. The protein resides in the podosome. In terms of biological role, ca(2+)-dependent actin filament-severing protein that has a regulatory function in exocytosis by affecting the organization of the microfilament network underneath the plasma membrane. In vitro, also has barbed end capping and nucleating activities in the presence of Ca(2+). Severing activity is inhibited by phosphatidylinositol 4,5-bis-phosphate (PIP2). Required for megakaryocyte differentiation, maturation, polyploidization and apoptosis with the release of platelet-like particles. Plays a role in osteoclastogenesis (OCG) and actin cytoskeletal organization in osteoclasts. Regulates chondrocyte proliferation and differentiation. Inhibits cell proliferation and tumorigenesis. Signaling is mediated by MAPK, p38 and JNK pathways. This Bos taurus (Bovine) protein is Scinderin.